A 510-amino-acid polypeptide reads, in one-letter code: Probable DNA ligase (510 aa).

E210 contributes to the ATP binding site. The N6-AMP-lysine intermediate role is filled by K212. Residues R217, R232, E261, F296, R367, and K373 each contribute to the ATP site.

It belongs to the ATP-dependent DNA ligase family. Mg(2+) serves as cofactor.

It catalyses the reaction ATP + (deoxyribonucleotide)n-3'-hydroxyl + 5'-phospho-(deoxyribonucleotide)m = (deoxyribonucleotide)n+m + AMP + diphosphate.. In terms of biological role, DNA ligase that seals nicks in double-stranded DNA during DNA replication, DNA recombination and DNA repair. The polypeptide is Probable DNA ligase (Saccharopolyspora erythraea (strain ATCC 11635 / DSM 40517 / JCM 4748 / NBRC 13426 / NCIMB 8594 / NRRL 2338)).